A 131-amino-acid polypeptide reads, in one-letter code: Putative gamma-taxilin 2 (131 aa).

This sequence belongs to the taxilin family. Ubiquitously expressed.

This is Putative gamma-taxilin 2 (TXLNGY) from Homo sapiens (Human).